Here is a 101-residue protein sequence, read N- to C-terminus: RNA-binding protein Hfq (101 aa).

Residues 9–68 form the Sm domain; that stretch reads DPFLNALRRERVPVSIYLVNGIKLQGQIESFDQFVILLKNTVSQMVYKHAISTVVPSRPV. The disordered stretch occupies residues 63-101; that stretch reads VPSRPVSHHNNNPSGGSSNYHHGSTPASQPSQPESDDAE. Over residues 70 to 86 the composition is skewed to low complexity; it reads HHNNNPSGGSSNYHHGS.

The protein belongs to the Hfq family. As to quaternary structure, homohexamer.

Functionally, RNA chaperone that binds small regulatory RNA (sRNAs) and mRNAs to facilitate mRNA translational regulation in response to envelope stress, environmental stress and changes in metabolite concentrations. Also binds with high specificity to tRNAs. In Sodalis glossinidius (strain morsitans), this protein is RNA-binding protein Hfq.